Consider the following 341-residue polypeptide: Mitochondrial transcription factor 1 (341 aa).

S-adenosyl-L-methionine-binding residues include Leu23, Glu77, Asp101, and Asn137.

The protein belongs to the class I-like SAM-binding methyltransferase superfamily. rRNA adenine N(6)-methyltransferase family.

It is found in the mitochondrion intermembrane space. Mitochondrial transcription factor that confers selective promoter recognition on the core subunit of the yeast mitochondrial RNA polymerase. Interacts with DNA in a non-specific manner. The protein is Mitochondrial transcription factor 1 (MTF1) of Saccharomyces cerevisiae (strain ATCC 204508 / S288c) (Baker's yeast).